The following is a 245-amino-acid chain: Methyltransferase-like protein 27 (245 aa).

The sequence is that of Methyltransferase-like protein 27 from Homo sapiens (Human).